The sequence spans 106 residues: MPFLDIQKRFGLNIDRWLTIQSGEQPYKMAGRCHAFEKEWIECAHGIGYTRAEKECKIEYDDFVECLLRQKTMRRAGTIRKQRDKLIKEGKYTPPPHHIGKGEPRP.

The CHCH domain occupies 30-74 (AGRCHAFEKEWIECAHGIGYTRAEKECKIEYDDFVECLLRQKTMR). 2 consecutive short sequence motifs (cx9C motif) follow at residues 33–43 (CHAFEKEWIEC) and 56–66 (CKIEYDDFVEC). Cystine bridges form between cysteine 33–cysteine 66 and cysteine 43–cysteine 56. The interval 84–106 (DKLIKEGKYTPPPHHIGKGEPRP) is disordered.

This sequence belongs to the complex I NDUFS5 subunit family. In terms of assembly, mammalian complex I is composed of 45 different subunits. This is a component of the iron-sulfur (IP) fragment of the enzyme.

It is found in the mitochondrion inner membrane. It localises to the mitochondrion intermembrane space. Accessory subunit of the mitochondrial membrane respiratory chain NADH dehydrogenase (Complex I), that is believed not to be involved in catalysis. Complex I functions in the transfer of electrons from NADH to the respiratory chain. The immediate electron acceptor for the enzyme is believed to be ubiquinone. The sequence is that of NADH dehydrogenase [ubiquinone] iron-sulfur protein 5 (NDUFS5) from Homo sapiens (Human).